We begin with the raw amino-acid sequence, 278 residues long: uncharacterized protein (278 aa).

Residues 1–32 form the signal peptide; that stretch reads MSSASFTTKALSVLAALTAASAPLVAASPAHA. Residues 33–236 form the Peptidase S1 domain; the sequence is LANARNVTGS…HAEWIAYYTG (204 aa). Cys-59 and Cys-75 form a disulfide bridge. Catalysis depends on charge relay system residues His-74, Asp-123, and Ser-189.

This sequence belongs to the peptidase S1 family.

The protein resides in the secreted. This is an uncharacterized protein from Corynebacterium glutamicum (strain R).